We begin with the raw amino-acid sequence, 69 residues long: Large ribosomal subunit protein bL31 (69 aa).

The Zn(2+) site is built by Cys-16, Cys-18, Cys-36, and Cys-39.

Belongs to the bacterial ribosomal protein bL31 family. Type A subfamily. Part of the 50S ribosomal subunit. Requires Zn(2+) as cofactor.

In terms of biological role, binds the 23S rRNA. The protein is Large ribosomal subunit protein bL31 of Kosmotoga olearia (strain ATCC BAA-1733 / DSM 21960 / TBF 19.5.1).